We begin with the raw amino-acid sequence, 518 residues long: GMP synthase [glutamine-hydrolyzing] (518 aa).

The 194-residue stretch at 8-201 folds into the Glutamine amidotransferase type-1 domain; the sequence is TVLIIDFGSQ…VCKISGIKNN (194 aa). The Nucleophile role is filled by C85. Catalysis depends on residues H175 and E177. In terms of domain architecture, GMPS ATP-PPase spans 202-393; it reads WSMAAYRDQA…LGLPEEFIKR (192 aa). 229–235 contacts ATP; it reads SGGVDSS.

As to quaternary structure, homodimer.

It catalyses the reaction XMP + L-glutamine + ATP + H2O = GMP + L-glutamate + AMP + diphosphate + 2 H(+). Its pathway is purine metabolism; GMP biosynthesis; GMP from XMP (L-Gln route): step 1/1. In terms of biological role, catalyzes the synthesis of GMP from XMP. This Bartonella bacilliformis (strain ATCC 35685 / KC583 / Herrer 020/F12,63) protein is GMP synthase [glutamine-hydrolyzing].